The primary structure comprises 553 residues: Transcription factor MYB65 (553 aa).

The disordered stretch occupies residues 1–44; the sequence is MSYTTATADSDDGMHSSIHNESPAPDSISNGCRSRGKRSVLKKG. 2 consecutive HTH myb-type domains span residues 38-90 and 91-145; these read RSVL…ANHL and RPNL…KRRQ. 2 consecutive DNA-binding regions (H-T-H motif) follow at residues 66–90 and 118–141; these read WNAVQKHTSLARCGKSCRLRWANHL and WAQMAEHLPGRTDNEIKNYWNTRI.

Mostly expressed in roots (e.g. root tips), stems, pollen, shoot apices, flowers and floral shoot tips, and, to a lower extent, in leaves and siliques.

It localises to the nucleus. In terms of biological role, transcriptional activator of alpha-amylase expression that binds to 5'-CAACTGTC-3' motif in target gene promoter. In vegetative tissues, inhibits growth by reducing cell proliferation. Promotes the expression of aleurone-related genes (e.g. CP1, CP, GASA1, BXL1 and BXL2) in seeds. Together with MYB33 and MYB101, promotes the programmed cell death (PCD) the vacuolation of protein storage vacuoles (PSVs) in the aleurone layers during seed germination. Together with MYB33, facilitates anther and tapetum development. In Arabidopsis thaliana (Mouse-ear cress), this protein is Transcription factor MYB65.